The following is a 1053-amino-acid chain: DNA-directed RNA polymerase subunit beta' (1053 aa).

Residues C60, C62, C75, and C78 each contribute to the Zn(2+) site. The Mg(2+) site is built by D449, D451, and D453.

It belongs to the RNA polymerase beta' chain family. The RNAP catalytic core consists of 2 alpha, 1 beta, 1 beta' and 1 omega subunit. When a sigma factor is associated with the core the holoenzyme is formed, which can initiate transcription. Requires Mg(2+) as cofactor. Zn(2+) serves as cofactor.

It catalyses the reaction RNA(n) + a ribonucleoside 5'-triphosphate = RNA(n+1) + diphosphate. Its function is as follows. DNA-dependent RNA polymerase catalyzes the transcription of DNA into RNA using the four ribonucleoside triphosphates as substrates. The protein is DNA-directed RNA polymerase subunit beta' of Brochothrix thermosphacta (Microbacterium thermosphactum).